Consider the following 1486-residue polypeptide: Rap guanine nucleotide exchange factor 2 (1486 aa).

Disordered regions lie at residues 40 to 59 and 68 to 101; these read HVSSSHSGCSITSDSGSSSL and SEAGDMDLSGLPETAVDSEDDDDEEDIERASDPL. Positions 83–94 are enriched in acidic residues; it reads VDSEDDDDEEDI. 135–252 contacts a nucleoside 3',5'-cyclic phosphate; sequence AFANMTMSVR…QKVEEEGEIV (118 aa). An N-terminal Ras-GEF domain is found at 267 to 380; sequence KGHIVIKGTS…RLLNIACAAK (114 aa). A PDZ domain is found at 385 to 468; that stretch reads LMTLTKPARE…LSITVKTNLF (84 aa). S501 is subject to Phosphoserine. Residues 606–692 enclose the Ras-associating domain; that stretch reads PDQVLRVFKA…GRYYLKNNME (87 aa). A Phosphothreonine modification is found at T644. The Ras-GEF domain occupies 717-944; it reads STVEVATQLS…SQGSTNATVL (228 aa). S806, S930, S933, and S1022 each carry phosphoserine. Positions 1002–1049 are disordered; it reads PATNTLPKNPTDKKPVKSETSPVAPRAGLQPKAQPQPQPPQPPHKLNQ. The span at 1035-1044 shows a compositional bias: pro residues; the sequence is QPQPQPPQPP. Residues S1077, S1086, S1092, S1113, S1117, S1156, and S1173 each carry the phosphoserine modification. Disordered regions lie at residues 1090-1176, 1221-1254, 1303-1357, and 1391-1486; these read EGSL…SVSI, PSTEELSQDQGDRASLDAADSGRGSWTSCSSGSH, KYSR…DSSS, and GRYR…VSAV. 2 stretches are compositionally biased toward low complexity: residues 1105–1122 and 1138–1159; these read SNTSSQLSSPPTSPQSSP and SDSGHSEISSRSSIVSNSSFDS. 2 stretches are compositionally biased toward polar residues: residues 1244-1254 and 1304-1328; these read GSWTSCSSGSH and YSRQSQSRESLDQAQSRASWASSTG. Residues 1475–1486 show a composition bias toward acidic residues; the sequence is AEEDEDEQVSAV.

Belongs to the RAPGEF2 family. As to quaternary structure, found in a complex, at least composed of KIDINS220, MAGI2, NTRK1 and RAPGEF2; the complex is mainly formed at late endosomes in a neuronal growth factor (NGF)-dependent manner. Interacts (via C-terminal domain) with NEDD4 (via WW domains); this interaction leads to ubiquitination and degradation via the proteasome pathway in a cAMP-independent manner. Interacts with MAGI1 (via PDZ domain). Interacts with ADRB1 (via C-terminal PDZ motif); the interaction is direct. Interacts (via Ras-associating domain) with RAP1A (via GTP-bound active form). Interacts weakly with HRAS (via GDP- and GTP-bound forms). Interacts (via C-terminal domain) with MAGI2 (via PDZ and WW domains). Interacts with CDH1 and TJP1. Interacts with CTNNB1. In terms of processing, ubiquitinated by NEDD4, leading to proteasomal degradation. Post-translationally, phosphorylation by PLK2 promotes its activity.

The protein localises to the cytoplasm. It localises to the perinuclear region. Its subcellular location is the cell membrane. It is found in the late endosome. The protein resides in the cell junction. Functions as a guanine nucleotide exchange factor (GEF), which activates Rap and Ras family of small GTPases by exchanging bound GDP for free GTP in a cAMP-dependent manner. Serves as a link between cell surface receptors and Rap/Ras GTPases in intracellular signaling cascades. Also acts as an effector for Rap1 by direct association with Rap1-GTP thereby leading to the amplification of Rap1-mediated signaling. Shows weak activity on HRAS. It is controversial whether RAPGEF2 binds cAMP and cGMP or not. Its binding to ligand-activated beta-1 adrenergic receptor ADRB1 leads to the Ras activation through the G(s)-alpha signaling pathway. Involved in the cAMP-induced Ras and Erk1/2 signaling pathway that leads to sustained inhibition of long term melanogenesis by reducing dendrite extension and melanin synthesis. Also provides inhibitory signals for cell proliferation of melanoma cells and promotes their apoptosis in a cAMP-independent nanner. Regulates cAMP-induced neuritogenesis by mediating the Rap1/B-Raf/ERK signaling through a pathway that is independent on both PKA and RAPGEF3/RAPGEF4. Involved in neuron migration and in the formation of the major forebrain fiber connections forming the corpus callosum, the anterior commissure and the hippocampal commissure during brain development. Involved in neuronal growth factor (NGF)-induced sustained activation of Rap1 at late endosomes and in brain-derived neurotrophic factor (BDNF)-induced axon outgrowth of hippocampal neurons. Plays a role in the regulation of embryonic blood vessel formation and in the establishment of basal junction integrity and endothelial barrier function. May be involved in the regulation of the vascular endothelial growth factor receptor KDR and cadherin CDH5 expression at allantois endothelial cell-cell junctions. Binds to cAMP. The chain is Rap guanine nucleotide exchange factor 2 (RAPGEF2) from Bos taurus (Bovine).